A 295-amino-acid chain; its full sequence is Indole-3-glycerol phosphate synthase (295 aa).

The protein belongs to the TrpC family.

The enzyme catalyses 1-(2-carboxyphenylamino)-1-deoxy-D-ribulose 5-phosphate + H(+) = (1S,2R)-1-C-(indol-3-yl)glycerol 3-phosphate + CO2 + H2O. Its pathway is amino-acid biosynthesis; L-tryptophan biosynthesis; L-tryptophan from chorismate: step 4/5. The sequence is that of Indole-3-glycerol phosphate synthase from Prochlorococcus marinus (strain MIT 9211).